The chain runs to 213 residues: Eukaryotic translation initiation factor 4E (213 aa).

Ser2 and Ser15 each carry phosphoserine; by CK2. The residue at position 22 (Thr22) is a Phosphothreonine. 2 positions are modified to phosphoserine: Ser28 and Ser30. Residue Lys114 forms a Glycyl lysine isopeptide (Lys-Gly) (interchain with G-Cter in ubiquitin) linkage.

Belongs to the eukaryotic initiation factor 4E family. As to quaternary structure, component of the eIF4F complex, which composition varies with external and internal environmental conditions. It is composed of at least eIF4A (TIF1/TIF2), eIF4E (TIF45) and eIF4G (TIF4631 or TIF4632). Interacts with PAT1 in a RNA-dependent manner. eIF4E is also known to interact with other partners.

The protein resides in the cytoplasm. It localises to the nucleus. Recognizes and binds the 7-methylguanosine (m7G)-containing mRNA cap during an early step in the initiation of protein synthesis and facilitates ribosome binding by inducing the unwinding of the mRNAs secondary structures. The polypeptide is Eukaryotic translation initiation factor 4E (CDC33) (Saccharomyces cerevisiae (strain ATCC 204508 / S288c) (Baker's yeast)).